Consider the following 432-residue polypeptide: Hexuronate transporter (432 aa).

Positions 1 to 31 are cleaved as a signal peptide; sequence MRKIKGLRWYMIALVTLGTVLGYLTRNTVAA. At 33–48 the chain is on the periplasmic side; sequence APTLMEELNISTQQYS. A helical membrane pass occupies residues 49–69; that stretch reads YIIAAYSAAYTVMQPVAGYVL. Topologically, residues 70–75 are cytoplasmic; that stretch reads DVLGTK. Residues 76–96 traverse the membrane as a helical segment; it reads IGYAMFAVLWAVFCGATALAG. At 97-99 the chain is on the periplasmic side; it reads SWG. A helical membrane pass occupies residues 100-120; it reads GLAVARGAVGAAEAAMIPAGL. Over 121-138 the chain is Cytoplasmic; sequence KASSEWFPAKERSIAVGY. Residues 139–159 form a helical membrane-spanning segment; sequence FNVGSSIGAMIAPPLVVWAIV. The Periplasmic portion of the chain corresponds to 160 to 164; it reads MHSWQ. The chain crosses the membrane as a helical span at residues 165–185; the sequence is MAFIISGALSFIWAMAWLIFY. Residues 186–236 are Cytoplasmic-facing; it reads KHPRDQKHLTDEERDYIINGQEAQHQVSTAKKMSVGQILRNRQFWGIALPR. A helical membrane pass occupies residues 237 to 257; sequence FLAEPAWGTFNAWIPLFMFKV. Over 258–264 the chain is Periplasmic; that stretch reads YGFNLKE. The helical transmembrane segment at 265 to 285 threads the bilayer; that stretch reads IAMFAWMPMLFADLGCILGGY. The Cytoplasmic segment spans residues 286 to 293; it reads LPPLFQRW. A helical membrane pass occupies residues 294–314; the sequence is FGVNLIVSRKMVVTLGAVLMI. Residues 315-317 are Periplasmic-facing; that stretch reads GPG. A helical membrane pass occupies residues 318–338; the sequence is MIGLFTNPYVAIMLLCIGGFA. Residues 339-369 are Cytoplasmic-facing; it reads HQALSGALITLSSDVFGRNEVATANGLTGMS. Residues 370 to 390 form a helical membrane-spanning segment; sequence AWLASTLFALVVGALADTIGF. Position 391 (Ser-391) is a topological domain, periplasmic. Residues 392–412 traverse the membrane as a helical segment; it reads PLFAVLAVFDLLGALVIWTVL. At 413 to 432 the chain is on the cytoplasmic side; that stretch reads QNKPAIEVAQETHNDPAPQH.

This sequence belongs to the major facilitator superfamily. Phthalate permease family.

It localises to the cell inner membrane. The enzyme catalyses aldehydo-D-glucuronate(in) + H(+)(in) = aldehydo-D-glucuronate(out) + H(+)(out). The catalysed reaction is aldehydo-D-galacturonate(out) + H(+)(out) = aldehydo-D-galacturonate(in) + H(+)(in). In terms of biological role, transport of aldohexuronates such as D-glucuronate and D-galacturonate. This chain is Hexuronate transporter (exuT), found in Escherichia coli O157:H7.